The primary structure comprises 406 residues: Homocitrate synthase AksA (406 aa).

Residues 32-285 (IYIYDTTLRD…DLGLNLEVLP (254 aa)) form the Pyruvate carboxyltransferase domain.

Belongs to the alpha-IPM synthase/homocitrate synthase family.

The catalysed reaction is acetyl-CoA + 2-oxoglutarate + H2O = (2R)-homocitrate + CoA + H(+). It catalyses the reaction 2-oxoadipate + acetyl-CoA + H2O = (R)-dihomocitrate + CoA + H(+). It carries out the reaction 2-oxoheptanedioate + acetyl-CoA + H2O = (R)-trihomocitrate + CoA + H(+). It participates in organic acid metabolism; 2-oxosuberate biosynthesis. In terms of biological role, catalyzes the condensation of alpha-ketoglutarate and acetyl-CoA to form (R)-homocitrate. Can also catalyze the condensation of alpha-ketoadipate with acetyl-CoA to form (R)-homo(2)citrate, and the condensation of alpha-ketopimelate with acetyl-CoA to form (R)-homo(3)citrate. These reactions are part of the biosynthesis pathway of coenzyme B and biotin. The chain is Homocitrate synthase AksA (aksA) from Methanocaldococcus jannaschii (strain ATCC 43067 / DSM 2661 / JAL-1 / JCM 10045 / NBRC 100440) (Methanococcus jannaschii).